A 407-amino-acid chain; its full sequence is Probable endo-beta-1,4-glucanase celB (407 aa).

The first 18 residues, 1 to 18 (MALTLAATALVLLPLVTA), serve as a signal peptide directing secretion. A glycan (N-linked (GlcNAc...) asparagine) is linked at Asn136. Residue Glu216 is the Nucleophile of the active site. Catalysis depends on Glu221, which acts as the Proton donor.

Belongs to the glycosyl hydrolase 7 (cellulase C) family.

Its subcellular location is the secreted. The enzyme catalyses Endohydrolysis of (1-&gt;4)-beta-D-glucosidic linkages in cellulose, lichenin and cereal beta-D-glucans.. Functionally, has endoglucanase activity on substrates containing beta-1,4 glycosidic bonds, like in carboxymethylcellulose (CMC), hydroxyethylcellulose (HEC) and beta-glucan. Involved in the degradation of complex natural cellulosic substrates. The chain is Probable endo-beta-1,4-glucanase celB (celB) from Neosartorya fischeri (strain ATCC 1020 / DSM 3700 / CBS 544.65 / FGSC A1164 / JCM 1740 / NRRL 181 / WB 181) (Aspergillus fischerianus).